The primary structure comprises 103 residues: Large ribosomal subunit protein uL24 (103 aa).

This sequence belongs to the universal ribosomal protein uL24 family. In terms of assembly, part of the 50S ribosomal subunit.

Its function is as follows. One of two assembly initiator proteins, it binds directly to the 5'-end of the 23S rRNA, where it nucleates assembly of the 50S subunit. Functionally, one of the proteins that surrounds the polypeptide exit tunnel on the outside of the subunit. The chain is Large ribosomal subunit protein uL24 from Dehalococcoides mccartyi (strain ATCC BAA-2266 / KCTC 15142 / 195) (Dehalococcoides ethenogenes (strain 195)).